The chain runs to 823 residues: MDLMELLKQAQRLTNETNTDTEVPGVERTMSQVLQATKEFHSRVTQMGTNDLQAHILLGSKGVDLPKLTQKLESLSARQTFEPIDPVTETNVQAYLKNERENAILSVIDETNRSIFKSVERQKWRCIYSEWGEEKEALLNALVGPNQQDFPDVQFQIVPTAMADEPTPYSQLNGHEQMYAEQIAIHNQSIILGRRPNLLSTLAHVVQDSFNDESVAEMWNVLQFMTALPPVSSTIDPIKNRQTSPQFVEQARTYLERRYRTYMRKFIVANLAKARRGGIPSVYHMVRSYVGVTLQGQRALYGLHDVNNGQPLWPHVYYSLRSGDMDAAALYLKESGTCPDLLTLLTLRKNGDRDNLMVKLEGQLKLEYNSRLRACTDPYKKAVYVVLLACDPHFTHVELMRSIDDFLWMQLSILRRSDQSDSNTEQLTFSGLQSLILEKYGENYFNAREKAALYFQVLTLTGQFEAAIEFLARTEKNRTHAIHMAIALNEISMLGTPRSVEQSLLSSDPDDPKPMKRLNLVRLIVMYTKCFERTDTTQALHYYYLLRNFKSENGRGNVMLTCVCDLLVEKCDDEMLELIFGTEDKKNGLRYGGIYAEFQIHECDKYSLAEMVGDELSKRGDYELAIELYFIGGQLDKALRLVNSLLAQVVHQPTQNGSVRNRLGDIINRLDAALVVRKSDVEVQVVVTYTVLTKVMKFFDHYHEGALRSALEILTNNHLIPASSLEVDECVTNIKRMGPEVIKVLPDILLASMDIVYQEYVKLMDSNETASGFFDESKCVNKEPAVKHLRDRAKAFTNMAASVPYRMPSTTNQRLVQLEILMH.

Belongs to the nucleoporin interacting component (NIC) family. In terms of assembly, part of the nuclear pore complex (NPC). Interacts with msk (via C-terminus); this association might be facilitated by Nup75. Interacts with Mad (preferentially when phosphorylated). Interacts with Nup154 (via N-terminus). Interacts with the Polycomb group (PcG) proteins Pc and E(z).

It localises to the nucleus membrane. Its subcellular location is the nucleus. It is found in the nuclear pore complex. The protein resides in the nucleoplasm. Functionally, required for nuclear pore complex assembly, maintenance and function. Required for nuclear import of phosphorylated Mad via importin msk. Has no role in classical nuclear localization signal (cNLS)-dependent nuclear import via importin-beta. Mediates the association between the nuclear pore complex and a subclass of silenced regions bound by Polycomb group (PcG) proteins, enables long-range interactions between Polycomb loci and contributes to repression of polycomb targets. Together with Nup62 and Nup154, contributes to karyosome morphology and chromatin organization including attachment to the nuclear envelope in oocytes and nurse cells. The protein is Nuclear pore complex protein Nup93-1 of Drosophila melanogaster (Fruit fly).